A 460-amino-acid polypeptide reads, in one-letter code: ATP synthase subunit beta (460 aa).

150-157 (GGAGVGKT) serves as a coordination point for ATP.

It belongs to the ATPase alpha/beta chains family. F-type ATPases have 2 components, CF(1) - the catalytic core - and CF(0) - the membrane proton channel. CF(1) has five subunits: alpha(3), beta(3), gamma(1), delta(1), epsilon(1). CF(0) has three main subunits: a(1), b(2) and c(9-12). The alpha and beta chains form an alternating ring which encloses part of the gamma chain. CF(1) is attached to CF(0) by a central stalk formed by the gamma and epsilon chains, while a peripheral stalk is formed by the delta and b chains.

The protein localises to the cell inner membrane. The enzyme catalyses ATP + H2O + 4 H(+)(in) = ADP + phosphate + 5 H(+)(out). Its function is as follows. Produces ATP from ADP in the presence of a proton gradient across the membrane. The catalytic sites are hosted primarily by the beta subunits. The protein is ATP synthase subunit beta of Proteus mirabilis (strain HI4320).